Here is a 695-residue protein sequence, read N- to C-terminus: DNA ligase (695 aa).

NAD(+)-binding positions include 44–48 (DAEYD), 93–94 (SL), and glutamate 124. The active-site N6-AMP-lysine intermediate is the lysine 126. Positions 147, 187, 304, and 328 each coordinate NAD(+). Residues cysteine 422, cysteine 425, cysteine 440, and cysteine 445 each coordinate Zn(2+). The 90-residue stretch at 606–695 (TVQGPLAGKT…GIEVEAAARS (90 aa)) folds into the BRCT domain.

Belongs to the NAD-dependent DNA ligase family. LigA subfamily. It depends on Mg(2+) as a cofactor. Mn(2+) is required as a cofactor.

The catalysed reaction is NAD(+) + (deoxyribonucleotide)n-3'-hydroxyl + 5'-phospho-(deoxyribonucleotide)m = (deoxyribonucleotide)n+m + AMP + beta-nicotinamide D-nucleotide.. DNA ligase that catalyzes the formation of phosphodiester linkages between 5'-phosphoryl and 3'-hydroxyl groups in double-stranded DNA using NAD as a coenzyme and as the energy source for the reaction. It is essential for DNA replication and repair of damaged DNA. The polypeptide is DNA ligase (Thermomicrobium roseum (strain ATCC 27502 / DSM 5159 / P-2)).